Consider the following 170-residue polypeptide: CDP-archaeol synthase (170 aa).

Transmembrane regions (helical) follow at residues 9-29, 53-73, 79-99, 114-134, and 140-160; these read AFWY…LGGG, GFFG…FLLP, LGIA…GDLI, PAVG…AYPV, and GEVL…NIFA.

The protein belongs to the CDP-archaeol synthase family. The cofactor is Mg(2+).

Its subcellular location is the cell membrane. The enzyme catalyses 2,3-bis-O-(geranylgeranyl)-sn-glycerol 1-phosphate + CTP + H(+) = CDP-2,3-bis-O-(geranylgeranyl)-sn-glycerol + diphosphate. It functions in the pathway membrane lipid metabolism; glycerophospholipid metabolism. Its function is as follows. Catalyzes the formation of CDP-2,3-bis-(O-geranylgeranyl)-sn-glycerol (CDP-archaeol) from 2,3-bis-(O-geranylgeranyl)-sn-glycerol 1-phosphate (DGGGP) and CTP. This reaction is the third ether-bond-formation step in the biosynthesis of archaeal membrane lipids. The sequence is that of CDP-archaeol synthase from Pyrococcus horikoshii (strain ATCC 700860 / DSM 12428 / JCM 9974 / NBRC 100139 / OT-3).